The following is a 131-amino-acid chain: Protein E11 homolog (131 aa).

The protein belongs to the chordopoxvirinae E11 family.

Its subcellular location is the virion. This is Protein E11 homolog from Fowlpox virus (strain NVSL) (FPV).